The primary structure comprises 1368 residues: DNA-directed RNA polymerase subunit beta (1368 aa).

Belongs to the RNA polymerase beta chain family. In terms of assembly, the RNAP catalytic core consists of 2 alpha, 1 beta, 1 beta' and 1 omega subunit. When a sigma factor is associated with the core the holoenzyme is formed, which can initiate transcription.

It carries out the reaction RNA(n) + a ribonucleoside 5'-triphosphate = RNA(n+1) + diphosphate. DNA-dependent RNA polymerase catalyzes the transcription of DNA into RNA using the four ribonucleoside triphosphates as substrates. In Legionella pneumophila subsp. pneumophila (strain Philadelphia 1 / ATCC 33152 / DSM 7513), this protein is DNA-directed RNA polymerase subunit beta.